Here is a 181-residue protein sequence, read N- to C-terminus: Cyclic AMP-dependent transcription factor ATF-3 (181 aa).

The interval 73–97 (EMSVTKSEAAPEEDERKRRRRERNK) is disordered. Lys-78 participates in a covalent cross-link: Glycyl lysine isopeptide (Lys-Gly) (interchain with G-Cter in SUMO2). In terms of domain architecture, bZIP spans 86–149 (DERKRRRRER…QHLIYMLNLH (64 aa)). Residues 88-110 (RKRRRRERNKIAAAKCRNKKKEK) form a basic motif region. Residues 114–142 (LQKESEKLESVNAELKAQIEELKNEKQHL) form a leucine-zipper region. Thr-162 bears the Phosphothreonine mark. Lys-175 participates in a covalent cross-link: Glycyl lysine isopeptide (Lys-Gly) (interchain with G-Cter in SUMO2).

It belongs to the bZIP family. ATF subfamily. Binds DNA as a homodimer or a heterodimer. Interacts with KAT5; promoting KAT5 autoacetylation and KAT5 deubiquitination by USP7.

It is found in the nucleus. Functionally, this protein binds the cAMP response element (CRE) (consensus: 5'-GTGACGT[AC][AG]-3'), a sequence present in many viral and cellular promoters. Represses transcription from promoters with ATF sites. It may repress transcription by stabilizing the binding of inhibitory cofactors at the promoter. This Mus musculus (Mouse) protein is Cyclic AMP-dependent transcription factor ATF-3.